The sequence spans 347 residues: NADH-quinone oxidoreductase subunit H 1 (347 aa).

Helical transmembrane passes span isoleucine 14 to leucine 34, proline 50 to phenylalanine 70, isoleucine 83 to proline 103, valine 115 to glycine 135, isoleucine 161 to valine 181, phenylalanine 198 to leucine 218, alanine 258 to valine 278, valine 286 to valine 306, and leucine 321 to leucine 341.

Belongs to the complex I subunit 1 family. In terms of assembly, NDH-1 is composed of 14 different subunits. Subunits NuoA, H, J, K, L, M, N constitute the membrane sector of the complex.

It is found in the cell inner membrane. It carries out the reaction a quinone + NADH + 5 H(+)(in) = a quinol + NAD(+) + 4 H(+)(out). In terms of biological role, NDH-1 shuttles electrons from NADH, via FMN and iron-sulfur (Fe-S) centers, to quinones in the respiratory chain. The immediate electron acceptor for the enzyme in this species is believed to be ubiquinone. Couples the redox reaction to proton translocation (for every two electrons transferred, four hydrogen ions are translocated across the cytoplasmic membrane), and thus conserves the redox energy in a proton gradient. This subunit may bind ubiquinone. In Rhizobium meliloti (strain 1021) (Ensifer meliloti), this protein is NADH-quinone oxidoreductase subunit H 1.